Consider the following 192-residue polypeptide: LexA repressor (192 aa).

Positions 15 to 35 form a DNA-binding region, H-T-H motif; sequence RAEIARELGFRSANAAEEHLK. Catalysis depends on for autocatalytic cleavage activity residues S109 and K146.

The protein belongs to the peptidase S24 family. As to quaternary structure, homodimer.

The catalysed reaction is Hydrolysis of Ala-|-Gly bond in repressor LexA.. Represses a number of genes involved in the response to DNA damage (SOS response), including recA and lexA. In the presence of single-stranded DNA, RecA interacts with LexA causing an autocatalytic cleavage which disrupts the DNA-binding part of LexA, leading to derepression of the SOS regulon and eventually DNA repair. The sequence is that of LexA repressor from Photobacterium profundum (strain SS9).